A 151-amino-acid chain; its full sequence is Endoribonuclease YbeY (151 aa).

Zn(2+)-binding residues include His-113, His-117, and His-123.

It belongs to the endoribonuclease YbeY family. Requires Zn(2+) as cofactor.

It localises to the cytoplasm. Its function is as follows. Single strand-specific metallo-endoribonuclease involved in late-stage 70S ribosome quality control and in maturation of the 3' terminus of the 16S rRNA. This is Endoribonuclease YbeY from Polaromonas naphthalenivorans (strain CJ2).